The following is a 432-amino-acid chain: Enolase (432 aa).

Gln-163 contributes to the (2R)-2-phosphoglycerate binding site. Glu-205 (proton donor) is an active-site residue. Positions 242, 287, and 314 each coordinate Mg(2+). (2R)-2-phosphoglycerate-binding residues include Lys-339, Arg-368, Ser-369, and Lys-390. Lys-339 (proton acceptor) is an active-site residue.

It belongs to the enolase family. Requires Mg(2+) as cofactor.

It localises to the cytoplasm. Its subcellular location is the secreted. The protein localises to the cell surface. It catalyses the reaction (2R)-2-phosphoglycerate = phosphoenolpyruvate + H2O. The protein operates within carbohydrate degradation; glycolysis; pyruvate from D-glyceraldehyde 3-phosphate: step 4/5. Functionally, catalyzes the reversible conversion of 2-phosphoglycerate (2-PG) into phosphoenolpyruvate (PEP). It is essential for the degradation of carbohydrates via glycolysis. In Myxococcus xanthus (strain DK1622), this protein is Enolase.